A 446-amino-acid chain; its full sequence is N-succinylarginine dihydrolase 2 (446 aa).

Residues 20 to 29 (VGLSPGNLAS), Asn-111, and 138 to 139 (HR) each bind substrate. Glu-175 is an active-site residue. Position 212 (Arg-212) interacts with substrate. Residue His-246 is part of the active site. Substrate is bound by residues Asp-248 and Asn-361. Cys-367 acts as the Nucleophile in catalysis.

It belongs to the succinylarginine dihydrolase family. Homodimer.

It catalyses the reaction N(2)-succinyl-L-arginine + 2 H2O + 2 H(+) = N(2)-succinyl-L-ornithine + 2 NH4(+) + CO2. Its pathway is amino-acid degradation; L-arginine degradation via AST pathway; L-glutamate and succinate from L-arginine: step 2/5. Catalyzes the hydrolysis of N(2)-succinylarginine into N(2)-succinylornithine, ammonia and CO(2). This Caulobacter vibrioides (strain ATCC 19089 / CIP 103742 / CB 15) (Caulobacter crescentus) protein is N-succinylarginine dihydrolase 2.